The following is a 410-amino-acid chain: Arginine deiminase (410 aa).

Cys400 functions as the Amidino-cysteine intermediate in the catalytic mechanism.

The protein belongs to the arginine deiminase family.

Its subcellular location is the cytoplasm. It catalyses the reaction L-arginine + H2O = L-citrulline + NH4(+). The protein operates within amino-acid degradation; L-arginine degradation via ADI pathway; carbamoyl phosphate from L-arginine: step 1/2. The sequence is that of Arginine deiminase from Bacillus cereus (strain G9842).